The following is a 422-amino-acid chain: MRSVLSLALLAANVVTAAVVSPFDYSGYKVIRVPTQKDNVKEVQRVITDLNLDTWKYPKSEGQNADIVVPPSQISSFMERISGMNIEMMHEDLGLSIRNETSFEAYSAGYAPDINWFKSYHSYQDHLSYLQDLQGLFRTRSEYVDAGKSHEGRTIPALHIWGSGGKNSKPAIIFHGTIHAREWITTMVTEYMAWSFLSQYNKNADITSIVDNFDIWIFPIVNPDGFAFTQTSNRLWRKNRQPNPNARCPGRDLNRNYPYQWVGPGSSSNPCSDTYRGAQPGDGTEIKVHIANMKKIAANKGIAMFVDWHSYGQLFMSPYGYSCTARPPTDARHQELSRIFAQALKAVHGTPYKTGPICNTIYQVNGDSVDYALEVLKVKLSLTAELRDTGARGFVLPADQIIPSGEETLAGTVAMLKAVIQG.

An N-terminal signal peptide occupies residues 1-17; that stretch reads MRSVLSLALLAANVVTA. Residues 18-112 constitute a propeptide, activation peptide; the sequence is AVVSPFDYSG…FEAYSAGYAP (95 aa). One can recognise a Peptidase M14 domain in the interval 119–419; sequence SYHSYQDHLS…AGTVAMLKAV (301 aa). Residues His-179 and Glu-182 each contribute to the Zn(2+) site. Substrate contacts are provided by residues 179–182, Arg-237, and 254–255; these read HARE and NR. A disulfide bridge connects residues Cys-248 and Cys-271. His-309 serves as a coordination point for Zn(2+). A substrate-binding site is contributed by 310-311; it reads SY. Glu-385 serves as the catalytic Proton donor/acceptor.

This sequence belongs to the peptidase M14 family. The cofactor is Zn(2+).

It is found in the secreted. Its function is as follows. Extracellular metalloprotease that contributes to pathogenicity. This is Metallocarboxypeptidase A (MCPA) from Trichophyton rubrum (Athlete's foot fungus).